Reading from the N-terminus, the 310-residue chain is Glutamyl-Q tRNA(Asp) synthetase (310 aa).

Residues 24–28 (RFAPS) and E60 contribute to the L-glutamate site. The short motif at 27-37 (PSPSGPLHFGS) is the 'HIGH' region element. C116, C118, Y130, and C134 together coordinate Zn(2+). Residues Y187 and R205 each coordinate L-glutamate. Residues 243-247 (KLSKQ) carry the 'KMSKS' region motif. Residue K246 participates in ATP binding.

The protein belongs to the class-I aminoacyl-tRNA synthetase family. GluQ subfamily. The cofactor is Zn(2+).

Its function is as follows. Catalyzes the tRNA-independent activation of glutamate in presence of ATP and the subsequent transfer of glutamate onto a tRNA(Asp). Glutamate is transferred on the 2-amino-5-(4,5-dihydroxy-2-cyclopenten-1-yl) moiety of the queuosine in the wobble position of the QUC anticodon. This Photobacterium profundum (strain SS9) protein is Glutamyl-Q tRNA(Asp) synthetase.